Reading from the N-terminus, the 303-residue chain is Diaminopimelate epimerase (303 aa).

Asparagine 15, glutamine 47, and asparagine 67 together coordinate substrate. The active-site Proton donor is the cysteine 76. Residues 77–78, asparagine 163, asparagine 197, and 215–216 each bind substrate; these read GN and ER. Cysteine 224 functions as the Proton acceptor in the catalytic mechanism. Residue 225 to 226 coordinates substrate; sequence GS.

Belongs to the diaminopimelate epimerase family. Homodimer.

It is found in the cytoplasm. The enzyme catalyses (2S,6S)-2,6-diaminopimelate = meso-2,6-diaminopimelate. It participates in amino-acid biosynthesis; L-lysine biosynthesis via DAP pathway; DL-2,6-diaminopimelate from LL-2,6-diaminopimelate: step 1/1. Functionally, catalyzes the stereoinversion of LL-2,6-diaminopimelate (L,L-DAP) to meso-diaminopimelate (meso-DAP), a precursor of L-lysine and an essential component of the bacterial peptidoglycan. This Allorhizobium ampelinum (strain ATCC BAA-846 / DSM 112012 / S4) (Agrobacterium vitis (strain S4)) protein is Diaminopimelate epimerase.